Here is a 561-residue protein sequence, read N- to C-terminus: Dihydroxy-acid dehydratase (561 aa).

Residue Cys-51 participates in [2Fe-2S] cluster binding. Mg(2+) is bound at residue Asp-83. Cys-124 contributes to the [2Fe-2S] cluster binding site. Mg(2+) is bound by residues Asp-125 and Lys-126. An N6-carboxylysine modification is found at Lys-126. Cys-196 serves as a coordination point for [2Fe-2S] cluster. Position 448 (Glu-448) interacts with Mg(2+). Ser-473 serves as the catalytic Proton acceptor.

It belongs to the IlvD/Edd family. Homodimer. It depends on [2Fe-2S] cluster as a cofactor. Mg(2+) is required as a cofactor.

It carries out the reaction (2R)-2,3-dihydroxy-3-methylbutanoate = 3-methyl-2-oxobutanoate + H2O. The catalysed reaction is (2R,3R)-2,3-dihydroxy-3-methylpentanoate = (S)-3-methyl-2-oxopentanoate + H2O. It functions in the pathway amino-acid biosynthesis; L-isoleucine biosynthesis; L-isoleucine from 2-oxobutanoate: step 3/4. The protein operates within amino-acid biosynthesis; L-valine biosynthesis; L-valine from pyruvate: step 3/4. Functionally, functions in the biosynthesis of branched-chain amino acids. Catalyzes the dehydration of (2R,3R)-2,3-dihydroxy-3-methylpentanoate (2,3-dihydroxy-3-methylvalerate) into 2-oxo-3-methylpentanoate (2-oxo-3-methylvalerate) and of (2R)-2,3-dihydroxy-3-methylbutanoate (2,3-dihydroxyisovalerate) into 2-oxo-3-methylbutanoate (2-oxoisovalerate), the penultimate precursor to L-isoleucine and L-valine, respectively. The polypeptide is Dihydroxy-acid dehydratase (Sulfolobus acidocaldarius (strain ATCC 33909 / DSM 639 / JCM 8929 / NBRC 15157 / NCIMB 11770)).